The primary structure comprises 196 residues: uncharacterized protein (196 aa).

Positions 1–23 are cleaved as a signal peptide; sequence MSARAPKELRLALPPCLLNRTFA. 2 N-linked (GlcNAc...) asparagine glycosylation sites follow: Asn19 and Asn26. At 24 to 60 the chain is on the extracellular side; the sequence is SHNASGGSNAGIRSSGAGGGTCITQVGQQLFQSFSST. A helical transmembrane segment spans residues 61–81; sequence LVLIVLVTLIFCLIVLSLSTF. Residues 82-196 lie on the Cytoplasmic side of the membrane; that stretch reads HIHKRRMKKR…EGLLQTVVLS (115 aa). Residues 93–184 are disordered; that stretch reads MQRAQEEYER…AHAASSCLDT (92 aa). Composition is skewed to basic and acidic residues over residues 95-106 and 124-135; these read RAQEEYERDHCS and HGKETRLERQPR. The span at 161–171 shows a compositional bias: pro residues; it reads CAPPPPPPVPS. The segment covering 172–181 has biased composition (low complexity); the sequence is PHGAHAASSC.

The protein resides in the membrane. This is an uncharacterized protein from Rattus norvegicus (Rat).